We begin with the raw amino-acid sequence, 167 residues long: SsrA-binding protein (167 aa).

Residues Gln-139–Arg-158 show a composition bias toward basic and acidic residues. Positions Gln-139–Ala-167 are disordered.

This sequence belongs to the SmpB family.

Its subcellular location is the cytoplasm. In terms of biological role, required for rescue of stalled ribosomes mediated by trans-translation. Binds to transfer-messenger RNA (tmRNA), required for stable association of tmRNA with ribosomes. tmRNA and SmpB together mimic tRNA shape, replacing the anticodon stem-loop with SmpB. tmRNA is encoded by the ssrA gene; the 2 termini fold to resemble tRNA(Ala) and it encodes a 'tag peptide', a short internal open reading frame. During trans-translation Ala-aminoacylated tmRNA acts like a tRNA, entering the A-site of stalled ribosomes, displacing the stalled mRNA. The ribosome then switches to translate the ORF on the tmRNA; the nascent peptide is terminated with the 'tag peptide' encoded by the tmRNA and targeted for degradation. The ribosome is freed to recommence translation, which seems to be the essential function of trans-translation. The chain is SsrA-binding protein from Xanthomonas oryzae pv. oryzae (strain MAFF 311018).